We begin with the raw amino-acid sequence, 106 residues long: uncharacterized protein (106 aa).

The protein belongs to the csb family.

This is an uncharacterized protein from Dictyostelium discoideum (Social amoeba).